The primary structure comprises 72 residues: Translation initiation factor IF-1 (72 aa).

One can recognise an S1-like domain in the interval 2–72; it reads AKEDCIEMQG…NKGRIIFRSR (71 aa).

Belongs to the IF-1 family. In terms of assembly, component of the 30S ribosomal translation pre-initiation complex which assembles on the 30S ribosome in the order IF-2 and IF-3, IF-1 and N-formylmethionyl-tRNA(fMet); mRNA recruitment can occur at any time during PIC assembly.

The protein resides in the cytoplasm. One of the essential components for the initiation of protein synthesis. Stabilizes the binding of IF-2 and IF-3 on the 30S subunit to which N-formylmethionyl-tRNA(fMet) subsequently binds. Helps modulate mRNA selection, yielding the 30S pre-initiation complex (PIC). Upon addition of the 50S ribosomal subunit IF-1, IF-2 and IF-3 are released leaving the mature 70S translation initiation complex. The sequence is that of Translation initiation factor IF-1 from Pasteurella multocida (strain Pm70).